The primary structure comprises 220 residues: Putative 3-methyladenine DNA glycosylase (220 aa).

It belongs to the DNA glycosylase MPG family.

The sequence is that of Putative 3-methyladenine DNA glycosylase from Rickettsia bellii (strain RML369-C).